Here is a 269-residue protein sequence, read N- to C-terminus: Type II iodothyronine deiodinase (269 aa).

The Lumenal segment spans residues 1–9 (MGILSVDLL). The helical; Signal-anchor for type III membrane protein transmembrane segment at 10 to 34 (ITLQILPVFFSNCLFLALYDSVILL) threads the bilayer. Topologically, residues 35 to 269 (KHVVLLLSRS…KNFSKRUKLD (235 aa)) are cytoplasmic. The segment at 83-103 (NSSVVHVSSPEGGDTSGNGAQ) is disordered. U133 is an active-site residue. Residues U133 and U266 are each a non-standard amino acid (selenocysteine).

It belongs to the iodothyronine deiodinase family. Predominantly monomer. Can form homodimers but homodimerization is not essential for enzyme activity. Interacts with USP20 and USP33. Interacts with MARCHF6. In terms of processing, ubiquitinated by MARCHF6, leading to its degradation by the proteasome. Deubiquitinated by USP20 and USP33. Highly expressed in thyroid, mammary and pituitary glands, then in hypothalamus. Low levels detected in diaphragm, heart, kidney and lung.

It localises to the endoplasmic reticulum membrane. It catalyses the reaction 3,3',5-triiodo-L-thyronine + iodide + A + H(+) = L-thyroxine + AH2. It carries out the reaction 3,3'-diiodo-L-thyronine + iodide + A + H(+) = 3,3',5'-triiodo-L-thyronine + AH2. The enzyme catalyses 3'-iodo-L-thyronine + iodide + A + H(+) = 3',5'-diiodo-L-thyronine + AH2. The catalysed reaction is 3,3'-diiodothyronamine + iodide + A + H(+) = 3,3',5'-triiodothyronamine + AH2. It catalyses the reaction 3'-iodothyronamine + iodide + A + H(+) = 3',5'-diiodothyronamine + AH2. In terms of biological role, plays a crucial role in the metabolism of thyroid hormones (TH) and has specific roles in TH activation and inactivation by deiodination. Catalyzes the deiodination of L-thyroxine (T4) to 3,5,3'-triiodothyronine (T3), 3,3',5'-triiodothyronine (rT3) to 3,3'-diiodothyronine (3,3'-T2) and 3',5'-diiodothyronine (3',5'-T2) to 3'-monoiodothyronine (3'-T1) via outer-ring deiodination (ORD). Catalyzes the phenolic ring deiodinations of 3,3',5'-triiodothyronamine and 3',5'- diiodothyronamine. This is Type II iodothyronine deiodinase (DIO2) from Bos taurus (Bovine).